The chain runs to 354 residues: Uroporphyrinogen decarboxylase (354 aa).

Residues 27–31 (RQAGR), Asp77, Tyr154, Thr209, and His327 contribute to the substrate site.

It belongs to the uroporphyrinogen decarboxylase family. Homodimer.

It is found in the cytoplasm. The enzyme catalyses uroporphyrinogen III + 4 H(+) = coproporphyrinogen III + 4 CO2. Its pathway is porphyrin-containing compound metabolism; protoporphyrin-IX biosynthesis; coproporphyrinogen-III from 5-aminolevulinate: step 4/4. Functionally, catalyzes the decarboxylation of four acetate groups of uroporphyrinogen-III to yield coproporphyrinogen-III. In Escherichia coli O17:K52:H18 (strain UMN026 / ExPEC), this protein is Uroporphyrinogen decarboxylase.